The following is a 399-amino-acid chain: Enoyl-[acyl-carrier-protein] reductase [NADH] (399 aa).

Residues 48–53 (GASTGY), 74–75 (FE), 111–112 (DA), and 139–140 (LA) each bind NAD(+). Tyr-225 lines the substrate pocket. Residue Tyr-235 is the Proton donor of the active site. Residues Lys-244 and 273–275 (VVT) contribute to the NAD(+) site.

It belongs to the TER reductase family. Monomer.

The enzyme catalyses a 2,3-saturated acyl-[ACP] + NAD(+) = a (2E)-enoyl-[ACP] + NADH + H(+). It functions in the pathway lipid metabolism; fatty acid biosynthesis. Involved in the final reduction of the elongation cycle of fatty acid synthesis (FAS II). Catalyzes the reduction of a carbon-carbon double bond in an enoyl moiety that is covalently linked to an acyl carrier protein (ACP). In Serratia proteamaculans (strain 568), this protein is Enoyl-[acyl-carrier-protein] reductase [NADH].